Consider the following 429-residue polypeptide: MASVVVVGSQWGDEGKGKITDFLSQEADVVSRYQGGDNAGHTIVFNGQTFKLRLIPSGIFFHDKLAVIGNGVVLNPKSLVEELQYLRDKGVNPDNLRISNRAHVILPYHITLDGAQEKAKAGGKIGTTNKGIGPAYMDKAERIGIRVADLLDKDTFAALLKRNLAEKNQIITKLYDLEPLKFEDIFDDYYAYGQTLKPFVTDTSVVINDALDNGQRVLFEGAQGVMLDIDQGTYPYVTSSNPVAGGVTIGSGVGPSKIDNCVGVLKAYTSRVGDGPFPTELFDEVGDFIRETAHEYGTVTKRPRRIGWFDSVVLRHAKRVSGFTHLSLNCLDVLTGLKTIKVCTAYDLNGETIYHYPASLKELEACKPIYEELPGWDEDITGVKTFEELPTNAQNYLRKLEELVGVKIATFSVGPDREQTNVIDHNIWG.

Residues 12–18 (GDEGKGK) and 40–42 (GHT) each bind GTP. D13 acts as the Proton acceptor in catalysis. The Mg(2+) site is built by D13 and G40. IMP contacts are provided by residues 13–16 (DEGK), 38–41 (NAGH), T128, R142, Q223, T238, and R302. H41 functions as the Proton donor in the catalytic mechanism. 298–304 (TVTKRPR) is a substrate binding site. Residues R304, 330–332 (CLD), and 412–414 (SVG) contribute to the GTP site.

This sequence belongs to the adenylosuccinate synthetase family. As to quaternary structure, homodimer. The cofactor is Mg(2+).

The protein localises to the cytoplasm. It catalyses the reaction IMP + L-aspartate + GTP = N(6)-(1,2-dicarboxyethyl)-AMP + GDP + phosphate + 2 H(+). The protein operates within purine metabolism; AMP biosynthesis via de novo pathway; AMP from IMP: step 1/2. Functionally, plays an important role in the de novo pathway of purine nucleotide biosynthesis. Catalyzes the first committed step in the biosynthesis of AMP from IMP. The chain is Adenylosuccinate synthetase from Lactiplantibacillus plantarum (strain ATCC BAA-793 / NCIMB 8826 / WCFS1) (Lactobacillus plantarum).